The following is a 146-amino-acid chain: Hemoglobin subunit beta (146 aa).

A Globin domain is found at 2–146 (HWSAEEKQLI…VAHALARKYH (145 aa)). His-63 and His-92 together coordinate heme b.

It belongs to the globin family. As to quaternary structure, heterotetramer of two alpha chains and two beta chains. As to expression, red blood cells.

In terms of biological role, involved in oxygen transport from the lung to the various peripheral tissues. The sequence is that of Hemoglobin subunit beta (HBB) from Anseranas semipalmata (Magpie goose).